A 148-amino-acid chain; its full sequence is Small ribosomal subunit protein bS16 (148 aa).

Residues 111–122 (AAAGEEPVAEAT) are compositionally biased toward low complexity. The tract at residues 111–148 (AAAGEEPVAEATTPKKKGGKKAEAEDKAEEQKSEEGQA) is disordered. Over residues 130–148 (KKAEAEDKAEEQKSEEGQA) the composition is skewed to basic and acidic residues.

It belongs to the bacterial ribosomal protein bS16 family.

The protein is Small ribosomal subunit protein bS16 of Saccharopolyspora erythraea (strain ATCC 11635 / DSM 40517 / JCM 4748 / NBRC 13426 / NCIMB 8594 / NRRL 2338).